A 396-amino-acid polypeptide reads, in one-letter code: L-lactate dehydrogenase (396 aa).

One can recognise an FMN hydroxy acid dehydrogenase domain in the interval 1–380 (MIISAASDYR…TQDSLVQGLG (380 aa)). Tyr-24 contacts substrate. The FMN site is built by Ser-106 and Gln-127. Tyr-129 provides a ligand contact to substrate. Position 155 (Thr-155) interacts with FMN. Arg-164 is a binding site for substrate. Residue Lys-251 participates in FMN binding. His-275 acts as the Proton acceptor in catalysis. Arg-278 is a binding site for substrate. FMN is bound at residue 306 to 330 (DSGIRNGLDVVRMIALGADTVLLGR).

Belongs to the FMN-dependent alpha-hydroxy acid dehydrogenase family. FMN is required as a cofactor.

The protein resides in the cell inner membrane. It catalyses the reaction (S)-lactate + A = pyruvate + AH2. Functionally, catalyzes the conversion of L-lactate to pyruvate. Is coupled to the respiratory chain. This is L-lactate dehydrogenase from Shigella boydii serotype 4 (strain Sb227).